The chain runs to 271 residues: Oxamate carbamoyltransferase subunit AllH (271 aa).

The protein belongs to the AllH family. In terms of assembly, the OXTCase is composed of 3 subunits, AllF, AllG and AllH. It depends on Mg(2+) as a cofactor.

It carries out the reaction oxamate + carbamoyl phosphate = N-carbamoyl-2-oxoglycine + phosphate. It participates in nitrogen metabolism; (S)-allantoin degradation. Its function is as follows. Component of a carbamoyltransferase involved in the anaerobic nitrogen utilization via the assimilation of allantoin. Catalyzes the conversion of oxalurate (N-carbamoyl-2-oxoglycine) to oxamate and carbamoyl phosphate. The protein is Oxamate carbamoyltransferase subunit AllH of Escherichia coli O157:H7.